The sequence spans 548 residues: Membrane protein insertase YidC (548 aa).

Residues 6–26 (NLLVIALLFVSFMIWQAWEQD) form a helical membrane-spanning segment. A disordered region spans residues 28-56 (NPQPQTQQTTQTTTTAAGSAADQGVPASG). The span at 29-42 (PQPQTQQTTQTTTT) shows a compositional bias: low complexity. The next 4 membrane-spanning stretches (helical) occupy residues 350–370 (FVGNWGFSIIIITFIVRGIMY), 424–444 (FPLIIQMPIFLALYYMLMGSI), 458–478 (LSAQDPYYILPILMGVTMFFI), and 499–519 (PVIFTVFFLWFPSGLVLYYIV).

Belongs to the OXA1/ALB3/YidC family. Type 1 subfamily. In terms of assembly, interacts with the Sec translocase complex via SecD. Specifically interacts with transmembrane segments of nascent integral membrane proteins during membrane integration.

The protein resides in the cell inner membrane. Its function is as follows. Required for the insertion and/or proper folding and/or complex formation of integral membrane proteins into the membrane. Involved in integration of membrane proteins that insert both dependently and independently of the Sec translocase complex, as well as at least some lipoproteins. Aids folding of multispanning membrane proteins. This chain is Membrane protein insertase YidC, found in Salmonella typhimurium (strain LT2 / SGSC1412 / ATCC 700720).